The following is a 121-amino-acid chain: Large ribosomal subunit protein uL14c (121 aa).

The protein belongs to the universal ribosomal protein uL14 family. As to quaternary structure, part of the 50S ribosomal subunit.

It localises to the plastid. It is found in the apicoplast. Functionally, binds to 23S rRNA. The sequence is that of Large ribosomal subunit protein uL14c (rpl14) from Toxoplasma gondii.